The sequence spans 591 residues: Laccase (591 aa).

Positions 1-20 are cleaved as a signal peptide; sequence MPSFFRALFSGLIASQLSWA. 2 consecutive Plastocyanin-like domains span residues 66–189 and 198–356; these read VRQY…IQID and IDLG…HPTN. N-linked (GlcNAc...) asparagine glycosylation occurs at asparagine 121. Cu cation is bound by residues histidine 126, histidine 128, histidine 171, and histidine 173. Cystine bridges form between cysteine 147–cysteine 571 and cysteine 332–cysteine 366. 4 N-linked (GlcNAc...) asparagine glycosylation sites follow: asparagine 234, asparagine 242, asparagine 265, and asparagine 323. Residues asparagine 407 and asparagine 425 are each glycosylated (N-linked (GlcNAc...) asparagine). In terms of domain architecture, Plastocyanin-like 3 spans 416–551; sequence GHPITQYVIN…AGLGNTFLEQ (136 aa). Cu cation-binding residues include histidine 463, histidine 466, histidine 468, histidine 533, cysteine 534, histidine 535, and histidine 539.

The protein belongs to the multicopper oxidase family. Requires Cu cation as cofactor.

The protein resides in the secreted. The catalysed reaction is 4 hydroquinone + O2 = 4 benzosemiquinone + 2 H2O. In terms of biological role, lignin degradation and detoxification of lignin-derived products. The sequence is that of Laccase (LAC-1) from Cryphonectria parasitica (Chestnut blight fungus).